Consider the following 1354-residue polypeptide: Rho-associated protein kinase 1 (1354 aa).

Ser-2 is modified (N-acetylserine). A Protein kinase domain is found at 76–338 (YEVVKVIGRG…VEEIKRHLFF (263 aa)). Residues 82 to 90 (IGRGAFGEV) and Lys-105 each bind ATP. The active-site Proton acceptor is Asp-198. The 69-residue stretch at 341–409 (DQWAWETLRD…YSNRRYLPSA (69 aa)) folds into the AGC-kinase C-terminal domain. The interaction with FHOD1 stretch occupies residues 368–727 (FDDLEEDKGD…KKLKEEREAR (360 aa)). Residues 422–692 (KSLQESLQKT…RLEQEVNEHK (271 aa)) adopt a coiled-coil conformation. In terms of domain architecture, REM-1 spans 479-556 (SAVSQIEKEK…LEEANDLLRT (78 aa)). An SHROOM3 binding region spans residues 707–946 (EAKSVAMCEM…TVSRLEETNS (240 aa)). One can recognise a RhoBD domain in the interval 949–1015 (TKDIEMLRKE…LAEIMNRKDF (67 aa)). An RHOA binding region spans residues 998–1010 (LKTQAVNKLAEIM). Residues 1011-1102 (NRKDFKIDRK…KLLDLSDSTS (92 aa)) are a coiled coil. Ser-1105 and Ser-1108 each carry phosphoserine. Residues 1115–1354 (NLPESRIEGW…VVKNTSGKTS (240 aa)) are auto-inhibitory. Residues 1118–1317 (ESRIEGWLSV…WVTHLVKKIP (200 aa)) enclose the PH domain. A Phorbol-ester/DAG-type zinc finger spans residues 1228–1283 (GHEFIPTLYHFPANCEACAKPLWHVFKPPPALECRRCHVKCHRDHLDKKEDLISPC). Ser-1328 is subject to Phosphoserine. The disordered stretch occupies residues 1333-1354 (STRSTANQSFRKVVKNTSGKTS).

It belongs to the protein kinase superfamily. AGC Ser/Thr protein kinase family. In terms of assembly, homodimer. Interacts with RHOA (activated by GTP), RHOB, RHOC, GEM, MYLC2B, RHOE, PPP1R12A, LIMK1, LIMK2, TSG101, CHORDC1, DAPK3, PFN1 and JIP3. Interacts with FHOD1 in a Src-dependent manner. Interacts with PTEN. Interacts with ITGB1BP1 (via N-terminus and PTB domain). Interacts with SHROOM3. Mg(2+) serves as cofactor. Post-translationally, autophosphorylated on serine and threonine residues. In terms of processing, cleaved by caspase-3 during apoptosis. This leads to constitutive activation of the kinase and membrane blebbing. Highly expressed in brain, heart, lung, liver, stomach, spleen, kidney, testis, muscle, embryo and placenta.

The protein resides in the cytoplasm. Its subcellular location is the cytoskeleton. It is found in the microtubule organizing center. It localises to the centrosome. The protein localises to the centriole. The protein resides in the golgi apparatus membrane. Its subcellular location is the cell projection. It is found in the bleb. It localises to the cell membrane. The protein localises to the lamellipodium. The protein resides in the ruffle. It carries out the reaction L-seryl-[protein] + ATP = O-phospho-L-seryl-[protein] + ADP + H(+). The catalysed reaction is L-threonyl-[protein] + ATP = O-phospho-L-threonyl-[protein] + ADP + H(+). Activated by RHOA binding. Inhibited by Y-27632. In terms of biological role, protein kinase which is a key regulator of the actin cytoskeleton and cell polarity. Involved in regulation of smooth muscle contraction, actin cytoskeleton organization, stress fiber and focal adhesion formation, neurite retraction, cell adhesion and motility via phosphorylation of DAPK3, GFAP, LIMK1, LIMK2, MYL9/MLC2, TPPP, PFN1 and PPP1R12A. Phosphorylates FHOD1 and acts synergistically with it to promote SRC-dependent non-apoptotic plasma membrane blebbing. Phosphorylates JIP3 and regulates the recruitment of JNK to JIP3 upon UVB-induced stress. Acts as a suppressor of inflammatory cell migration by regulating PTEN phosphorylation and stability. Acts as a negative regulator of VEGF-induced angiogenic endothelial cell activation. Required for centrosome positioning and centrosome-dependent exit from mitosis. Plays a role in terminal erythroid differentiation. Inhibits podocyte motility via regulation of actin cytoskeletal dynamics and phosphorylation of CFL1. Promotes keratinocyte terminal differentiation. Involved in osteoblast compaction through the fibronectin fibrillogenesis cell-mediated matrix assembly process, essential for osteoblast mineralization. May regulate closure of the eyelids and ventral body wall by inducing the assembly of actomyosin bundles. The chain is Rho-associated protein kinase 1 (Rock1) from Mus musculus (Mouse).